A 295-amino-acid polypeptide reads, in one-letter code: CRISPR system Cmr endoribonuclease Cmr4 (295 aa).

This sequence belongs to the CRISPR system Cmr4 family. Forms oligomers in isolation. Part of the type III-B Cmr ribonucleoprotein (RNP) complex, an elongated RNP with Cmr2 and Cmr3 as the base, with Cmr4 and Cmr5 forming a helical core along the mature crRNA (39 or 45 nt in length), while the complex is capped by Cmr6 and Cmr1. The 5' end of the crRNA is bound to Cmr2 and Cmr3, while Cmr6 and a Cmr1 subunit (Cmr1-1 or Cmr1-2) cap the 3' end of the crRNA. The target RNA lies anti-parallel to the crRNA, with its 5' end near Cmr1 and Cmr6 and its 3' end near Cmr2 and Cmr3; major target RNA cleavage occurs nears the junction of Cmr1/Cmr6 and Cmr4/Cmr5, with minor cleavage occurring at 6 nt intervals which coincide with the proposed spacing of Cmr4 subunits. Interacts with Cmr5. Interacts with Cmr2, Cmr3, Cmr5 and Cmr6.

It is found in the cytoplasm. Its function is as follows. CRISPR (clustered regularly interspaced short palindromic repeat), is an adaptive immune system that provides protection against mobile genetic elements (viruses, transposable elements and conjugative plasmids). CRISPR clusters contain sequences complementary to antecedent mobile elements and target invading nucleic acids. CRISPR clusters are transcribed and processed into CRISPR RNA (crRNA), formerly called psiRNA (prokaryotic silencing) in this organism. Part of the Cmr ribonucleoprotein complex which has divalent cation-dependent endoribonuclease activity specific for ssRNA complementary to the crRNA (target RNA), generating 5' hydroxy- and 3' phosphate or 2'-3' cyclic phosphate termini. This is probably the subunit that cleaves the target RNA. Cmr complex does not cleave ssDNA complementary to the crRNA. Cleavage of target RNA is guided by the crRNA; substrate cleavage occurs a fixed distance (14 nt) from the 3' end of the crRNA. In vitro reconstitution shows Cmr1-2 and Cmr5 are not absolutely necessary for target cleavage. The polypeptide is CRISPR system Cmr endoribonuclease Cmr4 (Pyrococcus furiosus (strain ATCC 43587 / DSM 3638 / JCM 8422 / Vc1)).